Consider the following 744-residue polypeptide: ATP-dependent zinc metalloprotease FtsH (744 aa).

Topologically, residues 1–16 (MQDQNNSNTPKKKKLS) are cytoplasmic. A helical transmembrane segment spans residues 17–37 (FWGIIGIVASILVLLVIAYII). Over 38 to 177 (YYYVSQTTVL…ESIWSTVLRY (140 aa)) the chain is Extracellular. A helical membrane pass occupies residues 178–198 (GTNIIFLLLFAASFIFMFMSF). Residues 199–744 (RSQRGTGGLL…EEKSKDEKNN (546 aa)) lie on the Cytoplasmic side of the membrane. 264 to 271 (GPPGTGKT) lines the ATP pocket. H486 is a binding site for Zn(2+). Residue E487 is part of the active site. The Zn(2+) site is built by H490 and D564. A disordered region spans residues 722-744 (IEANKSSSKSTVNEEKSKDEKNN). The segment covering 733 to 744 (VNEEKSKDEKNN) has biased composition (basic and acidic residues).

In the central section; belongs to the AAA ATPase family. This sequence in the C-terminal section; belongs to the peptidase M41 family. In terms of assembly, homohexamer. Zn(2+) is required as a cofactor.

The protein resides in the cell membrane. In terms of biological role, acts as a processive, ATP-dependent zinc metallopeptidase for both cytoplasmic and membrane proteins. Plays a role in the quality control of integral membrane proteins. This chain is ATP-dependent zinc metalloprotease FtsH, found in Metamycoplasma arthritidis (strain 158L3-1) (Mycoplasma arthritidis).